The following is a 91-amino-acid chain: Probable Fe(2+)-trafficking protein (91 aa).

This sequence belongs to the Fe(2+)-trafficking protein family.

Functionally, could be a mediator in iron transactions between iron acquisition and iron-requiring processes, such as synthesis and/or repair of Fe-S clusters in biosynthetic enzymes. This Burkholderia cenocepacia (strain ATCC BAA-245 / DSM 16553 / LMG 16656 / NCTC 13227 / J2315 / CF5610) (Burkholderia cepacia (strain J2315)) protein is Probable Fe(2+)-trafficking protein.